The sequence spans 371 residues: Homoserine O-acetyltransferase (371 aa).

Positions 44 to 350 constitute an AB hydrolase-1 domain; the sequence is NAILVEHAWT…SYGHDAFLLE (307 aa). The active-site Nucleophile is the Ser150. Residue Arg217 coordinates substrate. Catalysis depends on residues Asp311 and His344. Asp345 provides a ligand contact to substrate.

The protein belongs to the AB hydrolase superfamily. MetX family. In terms of assembly, homodimer.

It localises to the cytoplasm. It carries out the reaction L-homoserine + acetyl-CoA = O-acetyl-L-homoserine + CoA. The protein operates within amino-acid biosynthesis; L-methionine biosynthesis via de novo pathway; O-acetyl-L-homoserine from L-homoserine: step 1/1. In terms of biological role, transfers an acetyl group from acetyl-CoA to L-homoserine, forming acetyl-L-homoserine. The sequence is that of Homoserine O-acetyltransferase from Pelobacter propionicus (strain DSM 2379 / NBRC 103807 / OttBd1).